Reading from the N-terminus, the 863-residue chain is Receptor-like protein Cf-9 (863 aa).

A signal peptide spans 1–21 (MDCVKLVFLMLYTFLCQLALS). The Extracellular portion of the chain corresponds to 22–812 (SSLPHLCPED…EEDSPMISWQ (791 aa)). The segment at 24–91 (LPHLCPEDQA…GVHCDETTGQ (68 aa)) is N-cap. Asn-48, Asn-72, Asn-109, Asn-127, Asn-142, Asn-191, Asn-204, and Asn-212 each carry an N-linked (GlcNAc...) asparagine glycan. One copy of the LRR 1; degenerate repeat lies at 92-115 (VIALDLRCSQLQGKFHSNSSLFQL). LRR repeat units lie at residues 116–139 (SNLK…KFGE) and 141–164 (SNLT…ICHL). One copy of the LRR 4; degenerate repeat lies at 165–191 (SKLHVLRICDQYGLSLVPYNFELLLKN). 22 LRR repeats span residues 192–214 (LTQL…SNFS), 215–238 (SHLT…VFHL), 241–263 (LQSL…KWNS), 265–287 (ASLM…SFSH), 288–312 (LTSL…LWNL), 314–335 (NIVF…FTIF), 336–358 (EKLK…LSFN), 359–382 (TQLE…ISGL), 383–406 (QNLE…IFSL), 408–428 (SLVE…EFKS), 429–452 (KTLS…LLNQ), 454–476 (NLQL…ICNL), 477–500 (KTLI…VVER), 502–524 (EYLS…TFSV), 525–549 (GNIL…MINC), 551–572 (YLTL…WLGY), 573–597 (LFQL…GNTN), 599–623 (FMGL…ILGN), 667–690 (LDSN…IIGD), 691–714 (LVGL…SFQN), 715–739 (LSVL…LASL), and 741–759 (FLEV…IPKG). Asn-262 is a glycosylation site (N-linked (GlcNAc...) asparagine). N-linked (GlcNAc...) asparagine glycans are attached at residues Asn-300 and Asn-311. N-linked (GlcNAc...) asparagine glycosylation is found at Asn-378, Asn-396, and Asn-416. Residue Asn-464 is glycosylated (N-linked (GlcNAc...) asparagine). Asn-519 carries an N-linked (GlcNAc...) asparagine glycan. The N-linked (GlcNAc...) asparagine glycan is linked to Asn-563. Residues Asn-698 and Asn-714 are each glycosylated (N-linked (GlcNAc...) asparagine). N-linked (GlcNAc...) asparagine glycosylation is found at Asn-746 and Asn-767. The segment at 760-812 (KQFDSFGNTSYQGNDGLRGFPLSKLCGGEDQVTTPAELDQEEEEEDSPMISWQ) is C-cap/acidic domain. A helical membrane pass occupies residues 813–833 (GVLVGYGCGLVIGLSVIYIMW). Over 834 to 863 (STQYPAWFSRMDLKLEHIITTKMKKHKKRY) the chain is Cytoplasmic.

This sequence belongs to the RLP family. In terms of assembly, interacts with thioredoxin-like protein CITRX.

Its subcellular location is the cell membrane. Involved in plant defense. Confers resistance to the fungal pathogen C.fulvum through recognition of the AVR9 elicitor protein. The protein is Receptor-like protein Cf-9 of Solanum pimpinellifolium (Currant tomato).